The following is an 86-amino-acid chain: Neurotoxin 3FTx-8a (86 aa).

The N-terminal stretch at 1–21 (MKTLLLTLVVVTIVCLDLGYT) is a signal peptide. Intrachain disulfides connect C24–C45, C27–C32, C38–C63, C67–C78, and C79–C84.

In terms of tissue distribution, expressed by the venom gland.

The protein resides in the secreted. Functionally, binds with low affinity to muscular (alpha-1-beta-1-delta-epsilon/CHRNA1-CHRNB1-CHRND-CHRNE) and very low affinity to neuronal (alpha-7/CHRNA7) nicotinic acetylcholine receptor (nAChR). In Bungarus fasciatus (Banded krait), this protein is Neurotoxin 3FTx-8a.